We begin with the raw amino-acid sequence, 372 residues long: 3-dehydroquinate synthase (372 aa).

NAD(+)-binding positions include 113 to 117, 137 to 138, lysine 150, lysine 159, and 177 to 180; these read GVIGD, TS, and TLKT. Residues glutamate 192, histidine 257, and histidine 274 each coordinate Zn(2+).

The protein belongs to the sugar phosphate cyclases superfamily. Dehydroquinate synthase family. Co(2+) is required as a cofactor. It depends on Zn(2+) as a cofactor. The cofactor is NAD(+).

Its subcellular location is the cytoplasm. The catalysed reaction is 7-phospho-2-dehydro-3-deoxy-D-arabino-heptonate = 3-dehydroquinate + phosphate. It functions in the pathway metabolic intermediate biosynthesis; chorismate biosynthesis; chorismate from D-erythrose 4-phosphate and phosphoenolpyruvate: step 2/7. Catalyzes the conversion of 3-deoxy-D-arabino-heptulosonate 7-phosphate (DAHP) to dehydroquinate (DHQ). This Acaryochloris marina (strain MBIC 11017) protein is 3-dehydroquinate synthase.